The following is a 601-amino-acid chain: Probable sphingosine-1-phosphate lyase (601 aa).

Lys-360 is modified (N6-(pyridoxal phosphate)lysine).

The protein belongs to the group II decarboxylase family. Sphingosine-1-phosphate lyase subfamily. Requires pyridoxal 5'-phosphate as cofactor.

The catalysed reaction is sphinganine 1-phosphate = hexadecanal + phosphoethanolamine. Cleaves phosphorylated sphingoid bases (PSBs), such as sphingosine-1-phosphate, into fatty aldehydes and phosphoethanolamine. Possibly implicated in influencing the macrophage autophagy pathway. In Legionella pneumophila subsp. pneumophila (strain Philadelphia 1 / ATCC 33152 / DSM 7513), this protein is Probable sphingosine-1-phosphate lyase.